A 251-amino-acid polypeptide reads, in one-letter code: uncharacterized protein (251 aa).

Disordered stretches follow at residues 1–93, 107–152, 169–188, and 224–251; these read MQPG…ASPG, GLRS…SRPQ, PSSI…VSLS, and LQAQ…STPS. Residues 225 to 234 show a composition bias toward polar residues; the sequence is QAQNLPSSGP.

This is an uncharacterized protein from Homo sapiens (Human).